Here is a 216-residue protein sequence, read N- to C-terminus: Large ribosomal subunit protein bL25 (216 aa).

The interval 191–216 (LVSAESEEDEDAPAADEVPATEVSEE) is disordered. Acidic residues predominate over residues 195 to 204 (ESEEDEDAPA).

It belongs to the bacterial ribosomal protein bL25 family. CTC subfamily. As to quaternary structure, part of the 50S ribosomal subunit; part of the 5S rRNA/L5/L18/L25 subcomplex. Contacts the 5S rRNA. Binds to the 5S rRNA independently of L5 and L18.

This is one of the proteins that binds to the 5S RNA in the ribosome where it forms part of the central protuberance. This is Large ribosomal subunit protein bL25 from Jannaschia sp. (strain CCS1).